Consider the following 500-residue polypeptide: MAASFVIVIVISFFISLAFMCYVHYTSRQRRKLHGYGHEKAVRLPPGSMGWPYIGETLQLYSQDPNVFFASKQKRYGEIFKTHILGCPCVMLASPEAARFVLVTQAHLFKPTYPRSKERMIGPSALFFHQGDYHLRLRKLVQGPLGPDALRALVPDVEAAVRSTLASWDGNVSSTFHAMKRLSFDVGIVTIFGGRLDERRKAELRQNYAIVEKGYNSFPNSFPGTLYYKAIQARRRLHGVLSDIMRERRARGEPGSDLLGCLMQSRAGDDGALLTDEQVADNIIGVLFAAQDTTASVLTWIVKYLHDHPKLLEAVRAEQAAIRAANDGGRLPLTWAQTRSMALTHKVILESLRMASIISFTFREAVADVEYKGFLIPKGWKVMPLFRNIHHNPDYFQDPQKFDPSRFKVSPRPNTFMPFGNGVHACPGNELAKLEMLVLIHHLVTGYRWEIVGSSDEVEYSPFPVPKHGLLAKLWRDDSVSVETDGCQNGDNDDNGVAMV.

The helical transmembrane segment at 3-23 threads the bilayer; the sequence is ASFVIVIVISFFISLAFMCYV. Position 426 (Cys-426) interacts with heme.

Belongs to the cytochrome P450 family. Heme is required as a cofactor.

The protein resides in the membrane. The enzyme catalyses 2-cis-(+)-abscisate + reduced [NADPH--hemoprotein reductase] + O2 = (+)-8'-hydroxyabscisate + oxidized [NADPH--hemoprotein reductase] + H2O + H(+). It participates in plant hormone degradation; abscisic acid degradation. Involved in the oxidative degradation of abscisic acid. The sequence is that of Abscisic acid 8'-hydroxylase 3 (CYP707A7) from Oryza sativa subsp. japonica (Rice).